The primary structure comprises 319 residues: D-alanine--D-alanine ligase (319 aa).

The segment at 1 to 23 (MTGPEWAHTRGTKVGQSSRTPPK) is disordered. One can recognise an ATP-grasp domain in the interval 120–313 (KDAFVAAGLP…FGKLCAWMVE (194 aa)). 147-197 (MQPPYVVKPNNEGSSVGVYLVHEAANGPPQLSEDMPQEVMVEAFAPGRELT) serves as a coordination point for ATP. Mg(2+) is bound by residues aspartate 264, glutamate 280, and asparagine 282.

It belongs to the D-alanine--D-alanine ligase family. Mg(2+) serves as cofactor. The cofactor is Mn(2+).

The protein resides in the cytoplasm. It catalyses the reaction 2 D-alanine + ATP = D-alanyl-D-alanine + ADP + phosphate + H(+). The protein operates within cell wall biogenesis; peptidoglycan biosynthesis. Its function is as follows. Cell wall formation. In Roseobacter denitrificans (strain ATCC 33942 / OCh 114) (Erythrobacter sp. (strain OCh 114)), this protein is D-alanine--D-alanine ligase.